The sequence spans 139 residues: D-ribose pyranase (139 aa).

The Proton donor role is filled by H20. Substrate contacts are provided by residues D28, H106, and 128–130 (YAN).

This sequence belongs to the RbsD / FucU family. RbsD subfamily. In terms of assembly, homodecamer.

Its subcellular location is the cytoplasm. The catalysed reaction is beta-D-ribopyranose = beta-D-ribofuranose. The protein operates within carbohydrate metabolism; D-ribose degradation; D-ribose 5-phosphate from beta-D-ribopyranose: step 1/2. Functionally, catalyzes the interconversion of beta-pyran and beta-furan forms of D-ribose. The sequence is that of D-ribose pyranase from Vibrio cholerae serotype O1 (strain ATCC 39541 / Classical Ogawa 395 / O395).